Consider the following 242-residue polypeptide: Small ribosomal subunit protein uS2 (242 aa).

This sequence belongs to the universal ribosomal protein uS2 family.

This is Small ribosomal subunit protein uS2 from Shewanella sediminis (strain HAW-EB3).